Consider the following 283-residue polypeptide: Mitochondrial outer membrane protein porin (283 aa).

Belongs to the eukaryotic mitochondrial porin family.

Its subcellular location is the mitochondrion outer membrane. Functionally, forms a channel through the cell membrane that allows diffusion of small hydrophilic molecules. The channel adopts an open conformation at low or zero membrane potential and a closed conformation at potentials above 30-40 mV. The open state has a weak anion selectivity whereas the closed state is cation-selective. This Neurospora crassa (strain ATCC 24698 / 74-OR23-1A / CBS 708.71 / DSM 1257 / FGSC 987) protein is Mitochondrial outer membrane protein porin.